Consider the following 445-residue polypeptide: Phosphoglucosamine mutase (445 aa).

Ser-99 functions as the Phosphoserine intermediate in the catalytic mechanism. The Mg(2+) site is built by Ser-99, Asp-242, Asp-244, and Asp-246. Ser-99 is modified (phosphoserine).

The protein belongs to the phosphohexose mutase family. Requires Mg(2+) as cofactor. Activated by phosphorylation.

The catalysed reaction is alpha-D-glucosamine 1-phosphate = D-glucosamine 6-phosphate. Its function is as follows. Catalyzes the conversion of glucosamine-6-phosphate to glucosamine-1-phosphate. The chain is Phosphoglucosamine mutase from Helicobacter pylori (strain HPAG1).